We begin with the raw amino-acid sequence, 122 residues long: Small ribosomal subunit protein uS13 (122 aa).

The segment at Arg-99–Lys-122 is disordered.

Belongs to the universal ribosomal protein uS13 family. Part of the 30S ribosomal subunit. Forms a loose heterodimer with protein S19. Forms two bridges to the 50S subunit in the 70S ribosome.

Its function is as follows. Located at the top of the head of the 30S subunit, it contacts several helices of the 16S rRNA. In the 70S ribosome it contacts the 23S rRNA (bridge B1a) and protein L5 of the 50S subunit (bridge B1b), connecting the 2 subunits; these bridges are implicated in subunit movement. Contacts the tRNAs in the A and P-sites. The chain is Small ribosomal subunit protein uS13 from Sinorhizobium fredii (strain NBRC 101917 / NGR234).